The chain runs to 492 residues: N-succinylglutamate 5-semialdehyde dehydrogenase (492 aa).

220 to 225 (GSANTG) serves as a coordination point for NAD(+). Active-site residues include Glu-243 and Cys-277.

This sequence belongs to the aldehyde dehydrogenase family. AstD subfamily.

It carries out the reaction N-succinyl-L-glutamate 5-semialdehyde + NAD(+) + H2O = N-succinyl-L-glutamate + NADH + 2 H(+). The protein operates within amino-acid degradation; L-arginine degradation via AST pathway; L-glutamate and succinate from L-arginine: step 4/5. In terms of biological role, catalyzes the NAD-dependent reduction of succinylglutamate semialdehyde into succinylglutamate. The protein is N-succinylglutamate 5-semialdehyde dehydrogenase of Escherichia coli O81 (strain ED1a).